A 463-amino-acid chain; its full sequence is MAVTGGGRPAVRQQAARGKQMQRTFNNVKITLICGFITLLVLRGTVGINLLTYGVGGGGGSDAVAAAEEARVVEDIERILREIRSDTDDDDDDEEEEPLGVDASTTTTTNSTTTTATAARRRSSNHTYTLGPKVTRWNAKRRQWLSRNPGFPSRDARGKPRILLVTGSQPAPCDDAAGDHYLLKATKNKIDYCRIHGIEIVHSMAHLDRELAGYWAKLPLLRRLMLSHPEVEWVWWMDSDALFTDMAFELPLARYDTSNLVIHGYPELLFAKRSWIALNTGSFLLRNCQWSLELLDAWAPMGPKGRVRDEAGKVLTASLTGRPAFEADDQSALIHILLTQKERWMEKVYVEDKYFLHGFWAGLVDKYEEMMERHHPGLGDERWPFVTHFVGCKPCGGYGDYPRERCLGGMERAFNFADNQVLRLYGFRHRSLASARVRRVANRTDNPLVNKEAALKMDAKIES.

Topologically, residues 1–24 (MAVTGGGRPAVRQQAARGKQMQRT) are cytoplasmic. A helical; Signal-anchor for type II membrane protein transmembrane segment spans residues 25-47 (FNNVKITLICGFITLLVLRGTVG). At 48–463 (INLLTYGVGG…ALKMDAKIES (416 aa)) the chain is on the lumenal side. Positions 82 to 125 (EIRSDTDDDDDDEEEEPLGVDASTTTTTNSTTTTATAARRRSSN) are disordered. Positions 87-99 (TDDDDDDEEEEPL) are enriched in acidic residues. Low complexity predominate over residues 103–118 (ASTTTTTNSTTTTATA). Asparagine 110, asparagine 125, and asparagine 442 each carry an N-linked (GlcNAc...) asparagine glycan.

The protein belongs to the glycosyltransferase 34 family.

Its subcellular location is the golgi apparatus membrane. Probable glycosyltransferase that may be involved in the biosynthesis of xyloglucan. The polypeptide is Probable glycosyltransferase 3 (Oryza sativa subsp. japonica (Rice)).